Consider the following 291-residue polypeptide: tRNA dimethylallyltransferase (291 aa).

17-24 (GPTASGKS) provides a ligand contact to ATP. 19–24 (TASGKS) is a substrate binding site.

The protein belongs to the IPP transferase family. In terms of assembly, monomer. It depends on Mg(2+) as a cofactor.

It catalyses the reaction adenosine(37) in tRNA + dimethylallyl diphosphate = N(6)-dimethylallyladenosine(37) in tRNA + diphosphate. In terms of biological role, catalyzes the transfer of a dimethylallyl group onto the adenine at position 37 in tRNAs that read codons beginning with uridine, leading to the formation of N6-(dimethylallyl)adenosine (i(6)A). The polypeptide is tRNA dimethylallyltransferase (Cereibacter sphaeroides (strain ATCC 17025 / ATH 2.4.3) (Rhodobacter sphaeroides)).